The sequence spans 548 residues: CTP synthase (548 aa).

An amidoligase domain region spans residues 1 to 270 (MNRRSCAFIF…DTKISALLGC (270 aa)). Ser17 is a CTP binding site. Residue Ser17 coordinates UTP. ATP is bound by residues 18-23 (SIGKGL) and Asp75. Positions 75 and 143 each coordinate Mg(2+). CTP is bound by residues 150–152 (DIE), 190–195 (KTKPSQ), and Lys227. Residues 190–195 (KTKPSQ) and Lys227 each bind UTP. The Glutamine amidotransferase type-1 domain occupies 305 to 548 (YSGLCDAYIS…VRAGLLRKYS (244 aa)). Gly356 contacts L-glutamine. Cys383 serves as the catalytic Nucleophile; for glutamine hydrolysis. L-glutamine-binding positions include 384 to 387 (FGFQ), Glu407, and Arg475. Residues His521 and Glu523 contribute to the active site.

This sequence belongs to the CTP synthase family. Homotetramer.

The catalysed reaction is UTP + L-glutamine + ATP + H2O = CTP + L-glutamate + ADP + phosphate + 2 H(+). It catalyses the reaction L-glutamine + H2O = L-glutamate + NH4(+). It carries out the reaction UTP + NH4(+) + ATP = CTP + ADP + phosphate + 2 H(+). The protein operates within pyrimidine metabolism; CTP biosynthesis via de novo pathway; CTP from UDP: step 2/2. With respect to regulation, allosterically activated by GTP, when glutamine is the substrate; GTP has no effect on the reaction when ammonia is the substrate. The allosteric effector GTP functions by stabilizing the protein conformation that binds the tetrahedral intermediate(s) formed during glutamine hydrolysis. Inhibited by the product CTP, via allosteric rather than competitive inhibition. Its function is as follows. Catalyzes the ATP-dependent amination of UTP to CTP with either L-glutamine or ammonia as the source of nitrogen. Regulates intracellular CTP levels through interactions with the four ribonucleotide triphosphates. The sequence is that of CTP synthase from Neorickettsia sennetsu (strain ATCC VR-367 / Miyayama) (Ehrlichia sennetsu).